Here is a 349-residue protein sequence, read N- to C-terminus: 4-hydroxy-tetrahydrodipicolinate reductase 2, chloroplastic (349 aa).

Residues 1-53 (MAANGLMAASSVFLHRPVHPHFSFSSRTNQMVPLGFKGRVSFIGNVKRCFPVV) constitute a chloroplast transit peptide. Residues 81-86 (GCSGKM), 173-175 (GTT), and 196-199 (SPQM) contribute to the NAD(+) site. His232 functions as the Proton donor/acceptor in the catalytic mechanism. Residue Lys236 is the Proton donor of the active site. 241–242 (GT) contributes to the (S)-2,3,4,5-tetrahydrodipicolinate binding site.

It belongs to the DapB family.

Its subcellular location is the plastid. It localises to the chloroplast. The catalysed reaction is (S)-2,3,4,5-tetrahydrodipicolinate + NAD(+) + H2O = (2S,4S)-4-hydroxy-2,3,4,5-tetrahydrodipicolinate + NADH + H(+). It carries out the reaction (S)-2,3,4,5-tetrahydrodipicolinate + NADP(+) + H2O = (2S,4S)-4-hydroxy-2,3,4,5-tetrahydrodipicolinate + NADPH + H(+). It participates in amino-acid biosynthesis; L-lysine biosynthesis via DAP pathway; (S)-tetrahydrodipicolinate from L-aspartate: step 4/4. Its function is as follows. Catalyzes the conversion of 4-hydroxy-tetrahydrodipicolinate (HTPA) to tetrahydrodipicolinate. The sequence is that of 4-hydroxy-tetrahydrodipicolinate reductase 2, chloroplastic (DAPB2) from Arabidopsis thaliana (Mouse-ear cress).